A 415-amino-acid chain; its full sequence is MEVNFVTNRIEIAPTTRHEGHAKLILEVDEEGIVNKAYYLNTTPVRGFETMLKGKPAEFAPIAVMRICGICQTTHGIASCEAIENAIDCEVPDDGLLLRELVGIGNRLHSHPLHHLLTIDDFLKPDETDLKIELIKLIQRMRKVGQLVVDIVGGEGIHPPNIVIGGMRTNITERAKSRLYYALRQYEKDAYELYEKYTELIERYLEEIGIPDLGAHEYPYIATHTTYGDRYAINWDDVTEIPAQRYYDDEEAKQTTTIQIPLYAGVPAEGGPRARMVKFGNFREGGSAMDINIARAQENLGAVYRALEILDELDLNGKTRAEVEYKDGFGIGVHEAPRATNTHMAEVGKDGKIKSYRIIAASTWNFPIVEKAIEGYPQQYAEVIMRAYDICASCATHVIVKDEETKEIIEVRKML.

Cys-68, Cys-71, Cys-391, and Cys-394 together coordinate Ni(2+).

The protein belongs to the [NiFe]/[NiFeSe] hydrogenase large subunit family. Heterocomplex of the form (alpha(1)beta(1)gamma(1))(8). Requires Ni(2+) as cofactor. Iron-sulfur cluster is required as a cofactor. FAD serves as cofactor.

It catalyses the reaction oxidized coenzyme F420-(gamma-L-Glu)(n) + H2 + H(+) = reduced coenzyme F420-(gamma-L-Glu)(n). In terms of biological role, reduces the physiological low-potential two-electron acceptor coenzyme F420, and the artificial one-electron acceptor methylviologen. The sequence is that of Coenzyme F420 hydrogenase subunit alpha (frhA) from Methanocaldococcus jannaschii (strain ATCC 43067 / DSM 2661 / JAL-1 / JCM 10045 / NBRC 100440) (Methanococcus jannaschii).